The sequence spans 418 residues: AP-3 complex subunit mu-1 (418 aa).

Residues 176 to 417 form the MHD domain; it reads NNEAYFDVVE…VTKAGKFQVR (242 aa).

Belongs to the adaptor complexes medium subunit family. As to quaternary structure, adaptor protein complex 3 (AP-3) is a heterotetramer composed of two large adaptins (delta-type subunit AP3D1 and beta-type subunit AP3B1 or AP3B2), a medium adaptin (mu-type subunit AP3M1 or AP3M2) and a small adaptin (sigma-type subunit APS1 or AP3S2). Interacts with AGAP1. AP-3 associates with the BLOC-1 complex. (Microbial infection) Interacts with human respiratory virus (HRSV) matrix protein; this interaction plays an essential role in trafficking the matrix protein in host cells.

It localises to the golgi apparatus. The protein localises to the cytoplasmic vesicle membrane. Part of the AP-3 complex, an adaptor-related complex which is not clathrin-associated. The complex is associated with the Golgi region as well as more peripheral structures. It facilitates the budding of vesicles from the Golgi membrane and may be directly involved in trafficking to lysosomes. In concert with the BLOC-1 complex, AP-3 is required to target cargos into vesicles assembled at cell bodies for delivery into neurites and nerve terminals. The protein is AP-3 complex subunit mu-1 (AP3M1) of Homo sapiens (Human).